We begin with the raw amino-acid sequence, 290 residues long: Eukaryotic translation initiation factor 3 subunit G (290 aa).

The disordered stretch occupies residues 1-34 (MSRLGNRAADWADDEEFDDPSALPAQQVTTNKDG). The RRM domain maps to 210–288 (ATLRVTNVSE…LILRVEFAKR (79 aa)).

It belongs to the eIF-3 subunit G family. Component of the eukaryotic translation initiation factor 3 (eIF-3) complex.

The protein localises to the cytoplasm. Functionally, RNA-binding component of the eukaryotic translation initiation factor 3 (eIF-3) complex, which is involved in protein synthesis of a specialized repertoire of mRNAs and, together with other initiation factors, stimulates binding of mRNA and methionyl-tRNAi to the 40S ribosome. The eIF-3 complex specifically targets and initiates translation of a subset of mRNAs involved in cell proliferation. This subunit can bind 18S rRNA. In Aspergillus fumigatus (strain CBS 144.89 / FGSC A1163 / CEA10) (Neosartorya fumigata), this protein is Eukaryotic translation initiation factor 3 subunit G (tif35).